The sequence spans 299 residues: Tricarboxylate transport protein (299 aa).

Solcar repeat units follow at residues 10 to 97 (VDPL…IKDM), 109 to 199 (TRGV…IKTL), and 212 to 297 (LSSG…VLVM). 6 consecutive transmembrane segments (helical) span residues 16-36 (FLAG…FEFA), 66-86 (IGSI…KAGI), 113-133 (IAGL…FEAI), 174-193 (GVLP…LGCY), 215-235 (GLTF…TMPL), and 272-291 (GATP…FTIY).

The protein belongs to the mitochondrial carrier (TC 2.A.29) family.

It localises to the mitochondrion inner membrane. Transport of citrate across inner mitochondrial membrane. In Saccharomyces cerevisiae (strain ATCC 204508 / S288c) (Baker's yeast), this protein is Tricarboxylate transport protein (CTP1).